The primary structure comprises 387 residues: S-adenosylmethionine synthase (387 aa).

His-15 contacts ATP. Asp-17 is a Mg(2+) binding site. K(+) is bound at residue Glu-43. L-methionine-binding residues include Glu-56 and Gln-99. Residues 99-109 form a flexible loop region; that stretch reads QSPDIAQGVNR. ATP contacts are provided by residues 166–168, 232–233, Asp-241, 247–248, Ala-264, and Lys-268; these read DAK, RF, and RK. Asp-241 serves as a coordination point for L-methionine. L-methionine is bound at residue Lys-272.

The protein belongs to the AdoMet synthase family. As to quaternary structure, homotetramer; dimer of dimers. Mg(2+) is required as a cofactor. The cofactor is K(+).

It localises to the cytoplasm. The enzyme catalyses L-methionine + ATP + H2O = S-adenosyl-L-methionine + phosphate + diphosphate. It functions in the pathway amino-acid biosynthesis; S-adenosyl-L-methionine biosynthesis; S-adenosyl-L-methionine from L-methionine: step 1/1. Catalyzes the formation of S-adenosylmethionine (AdoMet) from methionine and ATP. The overall synthetic reaction is composed of two sequential steps, AdoMet formation and the subsequent tripolyphosphate hydrolysis which occurs prior to release of AdoMet from the enzyme. The sequence is that of S-adenosylmethionine synthase from Nitrosomonas europaea (strain ATCC 19718 / CIP 103999 / KCTC 2705 / NBRC 14298).